We begin with the raw amino-acid sequence, 430 residues long: Adenylosuccinate synthetase (430 aa).

GTP-binding positions include 11–17 (GDEGKGK) and 39–41 (GHS). Asp-12 serves as the catalytic Proton acceptor. 2 residues coordinate Mg(2+): Asp-12 and Gly-39. Residues 12-15 (DEGK), 37-40 (NAGH), Thr-129, Arg-143, Asn-221, Thr-236, and Arg-300 each bind IMP. Catalysis depends on His-40, which acts as the Proton donor. 296–302 (VSTGRKR) is a binding site for substrate. GTP is bound by residues Arg-302, 328-330 (KLD), and 412-414 (GTG).

Belongs to the adenylosuccinate synthetase family. In terms of assembly, homodimer. Mg(2+) is required as a cofactor.

The protein resides in the cytoplasm. It carries out the reaction IMP + L-aspartate + GTP = N(6)-(1,2-dicarboxyethyl)-AMP + GDP + phosphate + 2 H(+). The protein operates within purine metabolism; AMP biosynthesis via de novo pathway; AMP from IMP: step 1/2. Its function is as follows. Plays an important role in the de novo pathway and in the salvage pathway of purine nucleotide biosynthesis. Catalyzes the first committed step in the biosynthesis of AMP from IMP. The chain is Adenylosuccinate synthetase from Neurospora crassa (strain ATCC 24698 / 74-OR23-1A / CBS 708.71 / DSM 1257 / FGSC 987).